The sequence spans 242 residues: 1-(5-phosphoribosyl)-5-[(5-phosphoribosylamino)methylideneamino] imidazole-4-carboxamide isomerase (242 aa).

Asp10 acts as the Proton acceptor in catalysis. Residue Asp132 is the Proton donor of the active site.

The protein belongs to the HisA/HisF family.

It is found in the cytoplasm. It carries out the reaction 1-(5-phospho-beta-D-ribosyl)-5-[(5-phospho-beta-D-ribosylamino)methylideneamino]imidazole-4-carboxamide = 5-[(5-phospho-1-deoxy-D-ribulos-1-ylimino)methylamino]-1-(5-phospho-beta-D-ribosyl)imidazole-4-carboxamide. The protein operates within amino-acid biosynthesis; L-histidine biosynthesis; L-histidine from 5-phospho-alpha-D-ribose 1-diphosphate: step 4/9. The polypeptide is 1-(5-phosphoribosyl)-5-[(5-phosphoribosylamino)methylideneamino] imidazole-4-carboxamide isomerase (Methanothrix thermoacetophila (strain DSM 6194 / JCM 14653 / NBRC 101360 / PT) (Methanosaeta thermophila)).